The sequence spans 303 residues: Glutamyl-Q tRNA(Asp) synthetase (303 aa).

L-glutamate is bound by residues 9 to 13 (RFAPS) and Glu-45. A 'HIGH' region motif is present at residues 12–22 (PSPSGSLHFGS). The Zn(2+) site is built by Cys-101, Cys-103, Tyr-115, and Cys-119. Residues Tyr-172 and Arg-190 each contribute to the L-glutamate site. Residues 228-232 (KLSKQ) carry the 'KMSKS' region motif. Lys-231 is an ATP binding site.

The protein belongs to the class-I aminoacyl-tRNA synthetase family. GluQ subfamily. Requires Zn(2+) as cofactor.

In terms of biological role, catalyzes the tRNA-independent activation of glutamate in presence of ATP and the subsequent transfer of glutamate onto a tRNA(Asp). Glutamate is transferred on the 2-amino-5-(4,5-dihydroxy-2-cyclopenten-1-yl) moiety of the queuosine in the wobble position of the QUC anticodon. The chain is Glutamyl-Q tRNA(Asp) synthetase from Serratia proteamaculans (strain 568).